We begin with the raw amino-acid sequence, 215 residues long: 7-cyano-7-deazaguanine synthase (215 aa).

ATP is bound at residue 8–18 (LSAGLDSTVSL). C191, C199, C202, and C205 together coordinate Zn(2+).

The protein belongs to the QueC family. In terms of assembly, homodimer. Requires Zn(2+) as cofactor.

It catalyses the reaction 7-carboxy-7-deazaguanine + NH4(+) + ATP = 7-cyano-7-deazaguanine + ADP + phosphate + H2O + H(+). The protein operates within purine metabolism; 7-cyano-7-deazaguanine biosynthesis. In terms of biological role, catalyzes the ATP-dependent conversion of 7-carboxy-7-deazaguanine (CDG) to 7-cyano-7-deazaguanine (preQ(0)). This Carboxydothermus hydrogenoformans (strain ATCC BAA-161 / DSM 6008 / Z-2901) protein is 7-cyano-7-deazaguanine synthase.